The primary structure comprises 107 residues: Large ribosomal subunit protein bL21 (107 aa).

The protein belongs to the bacterial ribosomal protein bL21 family. In terms of assembly, part of the 50S ribosomal subunit. Contacts protein L20.

Its function is as follows. This protein binds to 23S rRNA in the presence of protein L20. This Chlamydia muridarum (strain MoPn / Nigg) protein is Large ribosomal subunit protein bL21.